The primary structure comprises 130 residues: UPF0102 protein RPE_0358 (130 aa).

This sequence belongs to the UPF0102 family.

The sequence is that of UPF0102 protein RPE_0358 from Rhodopseudomonas palustris (strain BisA53).